Here is a 228-residue protein sequence, read N- to C-terminus: L-ribulose-5-phosphate 4-epimerase UlaF (228 aa).

Substrate is bound by residues 26 to 27, 43 to 44, and 72 to 73; these read GN, SG, and SS. Residues Asp74, His93, and His95 each coordinate Zn(2+). Asp118 (proton donor/acceptor) is an active-site residue. His167 contacts Zn(2+). Tyr225 functions as the Proton donor/acceptor in the catalytic mechanism.

The protein belongs to the aldolase class II family. AraD/FucA subfamily. Zn(2+) serves as cofactor.

It catalyses the reaction L-ribulose 5-phosphate = D-xylulose 5-phosphate. It functions in the pathway cofactor degradation; L-ascorbate degradation; D-xylulose 5-phosphate from L-ascorbate: step 4/4. In terms of biological role, catalyzes the isomerization of L-ribulose 5-phosphate to D-xylulose 5-phosphate. Is involved in the anaerobic L-ascorbate utilization. The polypeptide is L-ribulose-5-phosphate 4-epimerase UlaF (Escherichia coli O8 (strain IAI1)).